The following is a 137-amino-acid chain: MANKPTPEELKNGLSEMQFYVTQHHGTEPPFTGRLLHNKKNGVYHCLVCDAPLFNSQTKYDSGCGWPSFYEPVSAEAIRYLTDNSHGMQRIEIRCGNCDAHLGHVFPDGPQPTGERYCVNSASLSFTDEQNGEQIKG.

Residues 7–129 enclose the MsrB domain; the sequence is PEELKNGLSE…NSASLSFTDE (123 aa). Zn(2+) contacts are provided by C46, C49, C95, and C98. C118 serves as the catalytic Nucleophile.

It belongs to the MsrB Met sulfoxide reductase family. The cofactor is Zn(2+).

The catalysed reaction is L-methionyl-[protein] + [thioredoxin]-disulfide + H2O = L-methionyl-(R)-S-oxide-[protein] + [thioredoxin]-dithiol. This is Peptide methionine sulfoxide reductase MsrB from Klebsiella pneumoniae subsp. pneumoniae (strain ATCC 700721 / MGH 78578).